Here is a 433-residue protein sequence, read N- to C-terminus: MKINIRDSTMVRPATETPITNLWNSNVDLVIPRFHTPSVYFYRPTGASNFFDPQVMKEALSKALVPFYPMAGRLKRDDDGRIEIDCNGAGVLFVVADTPSVIDDFGDFAPTLNLRQLIPEVDHSAGIHSFPLLVLQVTFFKCGGASLGVGMQHHAADGFSGLHFINTWSDMARGLDLTIPPFIDRTLLRARDPPQPAFHHVEYQPAPSMKIPLDPSKSGPENTTVSIFKLTRDQLVALKAKSKEDGNTVSYSSYEMLAGHVWRSVGKARGLPNDQETKLYIATDGRSRLRPQLPPGYFGNVIFTATPLAVAGDLLSKPTWYAAGQIHDFLVRMDDNYLRSALDYLEMQPDLSALVRGAHTYKCPNLGITSWVRLPIYDADFGWGRPIFMGPGGIPYEGLSFVLPSPTNDGSLSVAIALQSEHMKLFEKFLFEI.

The active-site Proton acceptor is His153. 4-coumaroyl-CoA contacts are provided by residues 252–255, 284–290, and 370–373; these read SSYE, DGRSRLR, and SWVR. The active-site Proton acceptor is the Asp380.

The protein belongs to the plant acyltransferase family.

It catalyses the reaction shikimate + 4-coumaroyl-CoA = trans-4-coumaroylshikimate + CoA. In terms of biological role, acyltransferase involved in the biosynthesis of lignin. Accepts caffeoyl-CoA and p-coumaroyl-CoA as substrates and transfers the acyl group on both shikimate and quinate acceptors. The sequence is that of Shikimate O-hydroxycinnamoyltransferase (HST) from Arabidopsis thaliana (Mouse-ear cress).